A 256-amino-acid polypeptide reads, in one-letter code: Enoyl-[acyl-carrier-protein] reductase [NADPH] FabI (256 aa).

NADP(+) contacts are provided by residues glycine 13, 19–20, 40–44, 66–67, and isoleucine 94; these read SI, RKERS, and DV. Alanine 97 is a binding site for substrate. Residues tyrosine 147 and tyrosine 157 each act as proton acceptor in the active site. Residues lysine 164 and 193–197 each bind NADP(+); that span reads IRTLS.

This sequence belongs to the short-chain dehydrogenases/reductases (SDR) family. FabI subfamily. Homotetramer.

The enzyme catalyses a 2,3-saturated acyl-[ACP] + NADP(+) = a (2E)-enoyl-[ACP] + NADPH + H(+). It functions in the pathway lipid metabolism; fatty acid biosynthesis. Inhibited by 1,4-disubstituted imidazoles, 1,4-benzodiazepine, naphthyridinone derivatives, triclosan and its diphenyl ether analgues. In terms of biological role, catalyzes the reduction of a carbon-carbon double bond in an enoyl moiety that is covalently linked to an acyl carrier protein (ACP). It has a preference for a long chain (C12) substrate compared to the shorter (C4) acyl group. Involved in the elongation cycle of fatty acid which are used in the lipid metabolism. This Staphylococcus aureus (strain NCTC 8325 / PS 47) protein is Enoyl-[acyl-carrier-protein] reductase [NADPH] FabI (fabI).